We begin with the raw amino-acid sequence, 242 residues long: Biosynthetic peptidoglycan transglycosylase (242 aa).

A helical membrane pass occupies residues 19 to 39 (ILAALAVFWGGGIALFSVVPV).

Belongs to the glycosyltransferase 51 family.

Its subcellular location is the cell inner membrane. The catalysed reaction is [GlcNAc-(1-&gt;4)-Mur2Ac(oyl-L-Ala-gamma-D-Glu-L-Lys-D-Ala-D-Ala)](n)-di-trans,octa-cis-undecaprenyl diphosphate + beta-D-GlcNAc-(1-&gt;4)-Mur2Ac(oyl-L-Ala-gamma-D-Glu-L-Lys-D-Ala-D-Ala)-di-trans,octa-cis-undecaprenyl diphosphate = [GlcNAc-(1-&gt;4)-Mur2Ac(oyl-L-Ala-gamma-D-Glu-L-Lys-D-Ala-D-Ala)](n+1)-di-trans,octa-cis-undecaprenyl diphosphate + di-trans,octa-cis-undecaprenyl diphosphate + H(+). It participates in cell wall biogenesis; peptidoglycan biosynthesis. Peptidoglycan polymerase that catalyzes glycan chain elongation from lipid-linked precursors. The polypeptide is Biosynthetic peptidoglycan transglycosylase (Salmonella heidelberg (strain SL476)).